Reading from the N-terminus, the 161-residue chain is 3-isopropylmalate dehydratase small subunit (161 aa).

This sequence belongs to the LeuD family. LeuD type 2 subfamily. Heterodimer of LeuC and LeuD.

The catalysed reaction is (2R,3S)-3-isopropylmalate = (2S)-2-isopropylmalate. It functions in the pathway amino-acid biosynthesis; L-leucine biosynthesis; L-leucine from 3-methyl-2-oxobutanoate: step 2/4. Its function is as follows. Catalyzes the isomerization between 2-isopropylmalate and 3-isopropylmalate, via the formation of 2-isopropylmaleate. This chain is 3-isopropylmalate dehydratase small subunit, found in Clostridium beijerinckii (strain ATCC 51743 / NCIMB 8052) (Clostridium acetobutylicum).